Here is a 251-residue protein sequence, read N- to C-terminus: MFVDDPSLHTLKRRRLEITDSMEASSSAQAKIADMREKLGREVRVFETSSISQRPSQVSSADDESDDFYEFTPADFYRLLATKKEDKSLKTRKIREAEEAARRSKLTKAVIRVRFPDNHTLEATFHPSEKIQGLIDLVKRVVAHPDVPFYLYTTPPKKQIKDFSQDFYSAGFVPGAIVYFSNDQPKDDGGSSTPYLNEEILSLKDLEAMTKAVEPVESSSEPATVDSSAVPVEHERKSTEKKTTKPKWFKM.

Residue Met1 is modified to N-acetylmethionine. Residues 104 to 180 form the UBX domain; the sequence is SKLTKAVIRV…GFVPGAIVYF (77 aa). The tract at residues 212 to 251 is disordered; it reads AVEPVESSSEPATVDSSAVPVEHERKSTEKKTTKPKWFKM. Positions 217–227 are enriched in polar residues; it reads ESSSEPATVDS. Residues 232–243 are compositionally biased toward basic and acidic residues; it reads VEHERKSTEKKT.

In terms of assembly, interacts with CDC48A (non-hexameric) via its UBX-containing C-terminal domain.

The protein localises to the cytoplasm. Its function is as follows. Regulates CDC48A by inhibiting its ATPase activity and by promoting the disassembly of the active hexamer. The chain is Plant UBX domain-containing protein 1 from Arabidopsis thaliana (Mouse-ear cress).